The following is a 282-amino-acid chain: Chorismate dehydratase (282 aa).

Belongs to the MqnA/MqnD family. MqnA subfamily.

It catalyses the reaction chorismate = 3-[(1-carboxyvinyl)-oxy]benzoate + H2O. Its pathway is quinol/quinone metabolism; menaquinone biosynthesis. Its function is as follows. Catalyzes the dehydration of chorismate into 3-[(1-carboxyvinyl)oxy]benzoate, a step in the biosynthesis of menaquinone (MK, vitamin K2). The chain is Chorismate dehydratase from Streptomyces coelicolor (strain ATCC BAA-471 / A3(2) / M145).